Reading from the N-terminus, the 451-residue chain is MSGDNTGNKSNSAPSKSIEELLKLLAMGQELSPAQQKEMKDYKFWKTQPVPSLSETVTEEGPIDKLKTPEDVPNDPLPLISDFEWSTLDIDDNLQLDELYKLLYDNYVEDIDATFRFKYSHEFFQWALKPPGWRKDWHVGVRVKSTGKLVAFIAATPVTFKLNKSNKVIDSVEINFLCIHKKLRNKRLAPVLIKEITRRVNKQNIWQALYTGGSILPTPLTTCRYQHRPINWSKLHDVGFSHLPPNQTKSSMVASYTLPNNPKLKGLRPMTGKDVSTVLSLLYKYQERFDIVQLFTEEEFKHWMLGHDENSDSNVVKSYVVEDENGVITDYFSYYLLPFTVLDNAQHDELGIAYLFYYASDSFEKPNYKKRLNELITDALITSKKFGVDVFNCLTCQDNTYFLKDCKFGSGDGFLNYYLFNYRTFPMDGGIDKKTKEVVEDQTSGIGVVLL.

Tetradecanoyl-CoA-binding positions include 177 to 179 (LCI) and 185 to 189 (NKRLA). The active-site Proton acceptor; via carboxylate is Leu451.

The protein belongs to the NMT family. As to quaternary structure, monomer.

It localises to the cytoplasm. It catalyses the reaction N-terminal glycyl-[protein] + tetradecanoyl-CoA = N-tetradecanoylglycyl-[protein] + CoA + H(+). With respect to regulation, competitively inhibited by SC-58272, a peptidomimetic derived from the N-terminal sequence of a natural substrate. In terms of biological role, adds a myristoyl group to the N-terminal glycine residue of certain cellular proteins. Substrate specificity requires an N-terminal glycine in the nascent polypeptide substrates. Ser is present at position 5 in almost all known N-myristoyl proteins and Lys is commonly encountered at postion 6. Basic residues are preferred at positions 7 and 8. This chain is Glycylpeptide N-tetradecanoyltransferase (NMT1), found in Candida albicans (strain SC5314 / ATCC MYA-2876) (Yeast).